Reading from the N-terminus, the 168-residue chain is Sperm acrosome-associated protein 9 (168 aa).

As to quaternary structure, microtubule inner protein component of sperm flagellar doublet microtubules. Interacts with CABP1 and CALR. Interacts with INCA1. Interacts with microtubules. As to expression, testis-specific. Expressed in round spermatids.

The protein localises to the cytoplasm. The protein resides in the cytoplasmic vesicle. It is found in the secretory vesicle. Its subcellular location is the acrosome. It localises to the cytoskeleton. The protein localises to the cilium basal body. The protein resides in the flagellum axoneme. It is found in the cilium axoneme. Its subcellular location is the nucleus. Its function is as follows. Microtubule inner protein (MIP) part of the dynein-decorated doublet microtubules (DMTs) of multiciliated respiratory cells and the distal singlet microtubules of monoflagellated spermatozoa. Forms an extensive interaction network cross-linking the lumen of axonemal doublet microtubules. This chain is Sperm acrosome-associated protein 9 (Spaca9), found in Rattus norvegicus (Rat).